The chain runs to 599 residues: MDPKYIRNFSIIAHIDHGKSTLADGLLSATGSLSDREKKDQFLDNMELERERGITIKAQTVCLDFKSKDGNMYQINLIDTPGHVDFSYEVSRSLAACEGAILVVDAAQGVEAQTLANVYLAMENNLEIIPVLNKIDLPSADPEGVAKQIEDTVGLDCTGIIHASAKEKIGITDILEAIVEKVPPPKADRSLTPRALIFDSWFDAYQGVVVLVRMVDGVIKKGDKIKFMATDRDYEVLRMGKYKPFPLMQDVLEAGEVGFIVCGIKDIRDVQVGDTVTSAKHPATQPLAGFQRIKPMVFAGIFPVVASEYENLKDALDKLCLNDSSLTFEVEKSAALGFGYRCGFLGLLHMEIVQERLEREFNLDLITTAPTVVYRITKTDGTEMMLENPSGMPVETQIAKFEEPYVKVTLHTPTDYIGGILKLCEDKRGIQQKMEYVTDKKVIIEYKLPMNEMVMDFYDRLKSISKGYASLEYEFVGFEESDLVKLDILINGEAIDALSLIVHRSKAQNRGRLLAEKMKELIPRQMYQVAIQAAIGAKIIARETLGAIRKDVTAKCYGGDISRKRKLLEKQKEGKKRMKAIGHVEVPQEAFLAILKVED.

The tr-type G domain occupies 4-186 (KYIRNFSIIA…AIVEKVPPPK (183 aa)). Residues 16-21 (DHGKST) and 133-136 (NKID) each bind GTP.

It belongs to the TRAFAC class translation factor GTPase superfamily. Classic translation factor GTPase family. LepA subfamily.

It localises to the cell inner membrane. The catalysed reaction is GTP + H2O = GDP + phosphate + H(+). Its function is as follows. Required for accurate and efficient protein synthesis under certain stress conditions. May act as a fidelity factor of the translation reaction, by catalyzing a one-codon backward translocation of tRNAs on improperly translocated ribosomes. Back-translocation proceeds from a post-translocation (POST) complex to a pre-translocation (PRE) complex, thus giving elongation factor G a second chance to translocate the tRNAs correctly. Binds to ribosomes in a GTP-dependent manner. This chain is Elongation factor 4, found in Bdellovibrio bacteriovorus (strain ATCC 15356 / DSM 50701 / NCIMB 9529 / HD100).